The sequence spans 90 residues: Large ribosomal subunit protein uL23c (90 aa).

Belongs to the universal ribosomal protein uL23 family. In terms of assembly, part of the 50S ribosomal subunit.

The protein localises to the plastid. The protein resides in the chloroplast. Functionally, binds to 23S rRNA. The sequence is that of Large ribosomal subunit protein uL23c (rpl23) from Psilotum nudum (Whisk fern).